The following is a 199-amino-acid chain: Elongation factor Ts (199 aa).

The segment at 82–85 is involved in Mg(2+) ion dislocation from EF-Tu; that stretch reads TDFV.

This sequence belongs to the EF-Ts family.

Its subcellular location is the cytoplasm. Its function is as follows. Associates with the EF-Tu.GDP complex and induces the exchange of GDP to GTP. It remains bound to the aminoacyl-tRNA.EF-Tu.GTP complex up to the GTP hydrolysis stage on the ribosome. In Leptospira borgpetersenii serovar Hardjo-bovis (strain JB197), this protein is Elongation factor Ts.